The chain runs to 459 residues: Cytosolic carboxypeptidase 6 (459 aa).

The 277-residue stretch at 142–418 (IPYTYGQMQI…AFCRALLNFY (277 aa)) folds into the Peptidase M14 domain. Residues H204, E207, and H302 each contribute to the Zn(2+) site. E376 serves as the catalytic Proton donor/acceptor.

It belongs to the peptidase M14 family. It depends on Zn(2+) as a cofactor. As to expression, expressed in labial and amphid neurons.

Its subcellular location is the cytoplasm. It carries out the reaction (L-glutamyl)(n+1)-gamma-L-glutamyl-L-glutamyl-[protein] + H2O = (L-glutamyl)(n)-gamma-L-glutamyl-L-glutamyl-[protein] + L-glutamate. In terms of biological role, metallocarboxypeptidase that catalyzes the removing of polyglutamate side chains that are present on the gamma-carboxyl group of glutamate residues of tubulin in sensory cilia. Probably via the deglutamylation of tubulin, promotes microtubule stability required for axon regrowth after injury. Also regulates microtubule dynamics in uterine muscle cells. This is Cytosolic carboxypeptidase 6 from Caenorhabditis elegans.